A 142-amino-acid polypeptide reads, in one-letter code: Large ribosomal subunit protein uL13 (142 aa).

This sequence belongs to the universal ribosomal protein uL13 family. As to quaternary structure, part of the 50S ribosomal subunit.

In terms of biological role, this protein is one of the early assembly proteins of the 50S ribosomal subunit, although it is not seen to bind rRNA by itself. It is important during the early stages of 50S assembly. This chain is Large ribosomal subunit protein uL13, found in Aeromonas hydrophila subsp. hydrophila (strain ATCC 7966 / DSM 30187 / BCRC 13018 / CCUG 14551 / JCM 1027 / KCTC 2358 / NCIMB 9240 / NCTC 8049).